A 677-amino-acid polypeptide reads, in one-letter code: Pre-mRNA-splicing factor CLF1 (677 aa).

HAT repeat units lie at residues 52–84, 86–118, 120–152, 154–185, 187–218, 220–255, 257–291, 301–333, 335–369, 379–415, 417–448, 450–482, 484–518, 520–551, 570–608, and 613–646; these read EYQGRKRKEFEDYVRRNRISMNNWMRYAQWELE, KEFRRARSVFERALDVDPTAVVLWIRYIEAEMK, RNINHARNLLDRAVTIYSRVDKLWYKYVYMEEM, GNIPGTRQVFERWMSWEPDEGAWGAYIKLEKR, NEFDRVRAIFERFTVVHPEPKNWIKWARFEEE, GTSDMVREVYGLAIETLGEDFMDEKLFIAYARYEAK, KEFERARAIYKYALDRLPRAKSVALHKAYTTFEKQ, VILSKRRVQYEEQIKENPKNYDIWFDFVRLEES, GDVERVRDVYERAIAQMPPSQEKRHWRRYIYLWIF, KDMERAHQIYQECIRLIPHKKFTFAKIWLMKAQFEIR, MDLQAARKTLGHAIGACPKDKLFKGYIDLERQ, FEFVRCRKLFEKQIEWSPSNCQAWIKFAELERG, DDIDRARAIYELGISQPVLDMPELLWKSYIDFEEY, GEYDRTRALYERLLEKTNHVKVWINFARFEIN, EAKRRARMVFERAHKVFKEKEMKEERVALLNAWKSFEQT, and DDIAKIERQMPSKVKKRRKLDDDRYEEYLDYMFP.

Belongs to the crooked-neck family. As to quaternary structure, associated with the spliceosome.

It is found in the nucleus. Involved in pre-mRNA splicing and cell cycle progression. Required for the spliceosome assembly and initiation of the DNA replication. The sequence is that of Pre-mRNA-splicing factor CLF1 (CLF1) from Paracoccidioides brasiliensis.